We begin with the raw amino-acid sequence, 1306 residues long: Putative late blight resistance protein homolog R1A-10 (1306 aa).

2 coiled-coil regions span residues 407–428 (SDSL…ESLQ) and 520–542 (PRMK…KLLS). The NB-ARC domain occupies 521-808 (RMKEEIVGFE…SEAFIKSSEG (288 aa)). Residue 554 to 561 (GMPGLGKT) participates in ATP binding. 11 LRR repeats span residues 858 to 881 (AEEN…VYSH), 921 to 935 (LSSL…ILPN), 936 to 961 (FKFL…PYLR), 979 to 1007 (LWNL…VWDM), 1010 to 1035 (LRHL…NLDD), 1057 to 1081 (TPNL…ALNF), 1082 to 1106 (PIRL…ISAP), 1110 to 1129 (YLKL…TADH), 1130 to 1153 (LKNL…KVSN), 1156 to 1181 (FPQL…AFPN), and 1216 to 1240 (ESVV…NFKL). The HMA domain maps to 1240–1306 (LVLIEKWPKF…KLRKCGMPGL (67 aa)).

The protein belongs to the disease resistance NB-LRR family.

The protein resides in the cytoplasm. It localises to the membrane. Confers resistance to late blight (Phytophthora infestans) races carrying the avirulence gene Avr1. Resistance proteins guard the plant against pathogens that contain an appropriate avirulence protein via an indirect interaction with this avirulence protein. That triggers a defense system including the hypersensitive response, which restricts the pathogen growth. The sequence is that of Putative late blight resistance protein homolog R1A-10 (R1A-10) from Solanum demissum (Wild potato).